The sequence spans 1009 residues: MICAL-like protein 2 (1009 aa).

The 107-residue stretch at Met1–His107 folds into the Calponin-homology (CH) domain. Residues Met1–Pro260 are forms an intramolecular interaction with the C-terminal coiled coil domain keeping the protein in a closed conformation. Phosphoserine occurs at positions 110, 143, and 153. Disordered regions lie at residues Gly114–Ala180, Ser247–Arg268, Asn348–Val447, and Ser655–Val834. Polar residues predominate over residues Pro144–Pro171. Residues Ser186–Val248 enclose the LIM zinc-binding domain. At Ser249 the chain carries Phosphoserine. Residues Gly261–Lys393 are necessary and sufficient for interaction with actinins. The interval Gly261–Glu805 is mediates targeting to the cell plasma membrane. The segment covering Asn348–Gln419 has biased composition (polar residues). Positions Pro430–Ala442 are enriched in pro residues. The segment covering Glu694–Arg730 has biased composition (basic and acidic residues). Low complexity-rich tracts occupy residues Lys731 to Ser746 and Pro755 to Pro769. Phosphoserine is present on residues Ser766 and Ser768. A compositionally biased stretch (basic and acidic residues) spans Glu791–Ala817. A forms an intramolecular interaction with the N-terminal Calponin-homology and LIM zinc-binding domains-containing region keeping the protein in a closed conformation region spans residues Lys806–Leu913. The residue at position 832 (Ser832) is a Phosphoserine. The bMERB domain occupies Pro833–Asn980. Positions Ile841–Glu880 form a coiled coil. The tract at residues Leu913–Ala1009 is mediates interaction with RAB13 and is required for transition from the closed to the open conformation.

Interacts with RAB13 (GTP-bound form); competes with RAB8A and is involved in tight junctions assembly. Interacts with RAB8A; competes with RAB13 and is involved in E-cadherin endocytic recycling. Interacts with RAB8B. Interacts (preferentially in opened conformation) with ACTN1 and ACTN4; stimulated by RAB13 activation. Interacts (via calponin-homology (CH) domain) with the filamins FLNA, FLNB and FLNC (via actin-binding domain). Detected in brain, lung, liver and kidney (at protein level).

It is found in the cell membrane. The protein localises to the cell junction. It localises to the tight junction. The protein resides in the recycling endosome. Its subcellular location is the cell projection. It is found in the neuron projection. The protein localises to the cytoplasm. It localises to the cytoskeleton. In terms of biological role, effector of small Rab GTPases RAB8A and RAB13 which is involved in junctional complexes assembly through the regulation of cell adhesion molecules transport to the plasma membrane and actin cytoskeleton reorganization. Regulates the endocytic recycling of occludins, claudins and E-cadherin to the plasma membrane and may thereby regulate the establishment of tight junctions and adherens junctions. In parallel, may regulate actin cytoskeleton reorganization directly through interaction with F-actin or indirectly through actinins and filamins. Undergoes liquid-liquid phase separation to form tubular recycling endosomes. Plays 2 sequential roles in the biogenesis of tubular recycling endosomes: first organizes phase separation and then the closed form formed by interaction with RAB8A promotes endosomal tubulation. The polypeptide is MICAL-like protein 2 (Micall2) (Mus musculus (Mouse)).